A 290-amino-acid polypeptide reads, in one-letter code: MDVSKALLWLEKQQTESAVKKAAKVADRTANEGLIGTTVLSSGVANGRRVGVRAAMVELNCETDFVARNELFANLLEDITHTAAFISEPANAETFMQPFSMETLQNAPLLSQTKPSQNGKATVSEAMRDLTGRVGEKISLRRALTVVRDPFTSSQPDLALRVAARVHQSVFNPTQGRIGSLALLALKSKRLSEVIASQTFQDDLDKLCQALGRQVIGFPTTCIRSPSGTTDEGALYDQPFSMFIGPGNDQSVGAFLQSWAQERSLVNEDEEQSAGVEVLEFAKWSVGEVV.

Belongs to the EF-Ts family.

The protein resides in the mitochondrion. Its function is as follows. Associates with the EF-Tu.GDP complex and induces the exchange of GDP to GTP. It remains bound to the aminoacyl-tRNA.EF-Tu.GTP complex up to the GTP hydrolysis stage on the ribosome. This is Elongation factor Ts, mitochondrial 1 from Postia placenta (strain ATCC 44394 / Madison 698-R) (Brown rot fungus).